We begin with the raw amino-acid sequence, 302 residues long: Quinolinate synthase (302 aa).

Histidine 24 and serine 41 together coordinate iminosuccinate. Residue cysteine 86 coordinates [4Fe-4S] cluster. Iminosuccinate-binding positions include 112–114 (YVN) and serine 129. Cysteine 171 lines the [4Fe-4S] cluster pocket. Iminosuccinate contacts are provided by residues 197–199 (HPE) and threonine 214. Cysteine 259 serves as a coordination point for [4Fe-4S] cluster.

The protein belongs to the quinolinate synthase family. Type 2 subfamily. [4Fe-4S] cluster serves as cofactor.

It localises to the cytoplasm. The catalysed reaction is iminosuccinate + dihydroxyacetone phosphate = quinolinate + phosphate + 2 H2O + H(+). It functions in the pathway cofactor biosynthesis; NAD(+) biosynthesis; quinolinate from iminoaspartate: step 1/1. Its function is as follows. Catalyzes the condensation of iminoaspartate with dihydroxyacetone phosphate to form quinolinate. This Dehalococcoides mccartyi (strain ATCC BAA-2266 / KCTC 15142 / 195) (Dehalococcoides ethenogenes (strain 195)) protein is Quinolinate synthase.